A 248-amino-acid chain; its full sequence is UPF0736 protein BcerKBAB4_1085 (248 aa).

The protein belongs to the UPF0736 family.

This is UPF0736 protein BcerKBAB4_1085 from Bacillus mycoides (strain KBAB4) (Bacillus weihenstephanensis).